The chain runs to 144 residues: Large ribosomal subunit protein uL13 (144 aa).

It belongs to the universal ribosomal protein uL13 family. As to quaternary structure, part of the 50S ribosomal subunit.

Its function is as follows. This protein is one of the early assembly proteins of the 50S ribosomal subunit, although it is not seen to bind rRNA by itself. It is important during the early stages of 50S assembly. This Buchnera aphidicola subsp. Baizongia pistaciae (strain Bp) protein is Large ribosomal subunit protein uL13.